The sequence spans 581 residues: Proline--tRNA ligase (581 aa).

The protein belongs to the class-II aminoacyl-tRNA synthetase family. ProS type 1 subfamily. Homodimer.

It localises to the cytoplasm. The catalysed reaction is tRNA(Pro) + L-proline + ATP = L-prolyl-tRNA(Pro) + AMP + diphosphate. In terms of biological role, catalyzes the attachment of proline to tRNA(Pro) in a two-step reaction: proline is first activated by ATP to form Pro-AMP and then transferred to the acceptor end of tRNA(Pro). As ProRS can inadvertently accommodate and process non-cognate amino acids such as alanine and cysteine, to avoid such errors it has two additional distinct editing activities against alanine. One activity is designated as 'pretransfer' editing and involves the tRNA(Pro)-independent hydrolysis of activated Ala-AMP. The other activity is designated 'posttransfer' editing and involves deacylation of mischarged Ala-tRNA(Pro). The misacylated Cys-tRNA(Pro) is not edited by ProRS. The protein is Proline--tRNA ligase of Paracidovorax citrulli (strain AAC00-1) (Acidovorax citrulli).